The sequence spans 578 residues: Phosphatase DCR2 (578 aa).

An ATP-binding site is contributed by 116–123 (GRRWFGKS).

Its subcellular location is the cytoplasm. In terms of biological role, required for cell cycle progression. Has a role in the completion of START. In Saccharomyces cerevisiae (strain ATCC 204508 / S288c) (Baker's yeast), this protein is Phosphatase DCR2 (DCR2).